The sequence spans 218 residues: Ribonuclease HII (218 aa).

The RNase H type-2 domain occupies 12 to 206 (GRVAGVDEVG…VREALARSAL (195 aa)). A divalent metal cation is bound by residues Asp18, Glu19, and Asp115.

It belongs to the RNase HII family. It depends on Mn(2+) as a cofactor. Mg(2+) serves as cofactor.

The protein resides in the cytoplasm. It carries out the reaction Endonucleolytic cleavage to 5'-phosphomonoester.. In terms of biological role, endonuclease that specifically degrades the RNA of RNA-DNA hybrids. The polypeptide is Ribonuclease HII (Rhodospirillum rubrum (strain ATCC 11170 / ATH 1.1.1 / DSM 467 / LMG 4362 / NCIMB 8255 / S1)).